The primary structure comprises 131 residues: ATP synthase epsilon chain (131 aa).

It belongs to the ATPase epsilon chain family. F-type ATPases have 2 components, CF(1) - the catalytic core - and CF(0) - the membrane proton channel. CF(1) has five subunits: alpha(3), beta(3), gamma(1), delta(1), epsilon(1). CF(0) has three main subunits: a, b and c.

The protein localises to the cell inner membrane. In terms of biological role, produces ATP from ADP in the presence of a proton gradient across the membrane. This is ATP synthase epsilon chain from Wolinella succinogenes (strain ATCC 29543 / DSM 1740 / CCUG 13145 / JCM 31913 / LMG 7466 / NCTC 11488 / FDC 602W) (Vibrio succinogenes).